A 725-amino-acid polypeptide reads, in one-letter code: Catalase-peroxidase (725 aa).

The disordered stretch occupies residues 1–20 (MSSEAKCPFPHAANRSRSNQ). The tryptophyl-tyrosyl-methioninium (Trp-Tyr) (with M-241) cross-link spans 91-215 (WHATGTYRTM…LSATHMGLIY (125 aa)). The active-site Proton acceptor is the His-92. A cross-link (tryptophyl-tyrosyl-methioninium (Tyr-Met) (with W-91)) is located at residues 215–241 (YVNPEGPDGSGDYMAAAKDIRATFYRM). A heme b-binding site is contributed by His-256.

This sequence belongs to the peroxidase family. Peroxidase/catalase subfamily. In terms of assembly, homodimer or homotetramer. The cofactor is heme b. Formation of the three residue Trp-Tyr-Met cross-link is important for the catalase, but not the peroxidase activity of the enzyme.

The catalysed reaction is H2O2 + AH2 = A + 2 H2O. It catalyses the reaction 2 H2O2 = O2 + 2 H2O. Its function is as follows. Bifunctional enzyme with both catalase and broad-spectrum peroxidase activity. The sequence is that of Catalase-peroxidase from Janthinobacterium sp. (strain Marseille) (Minibacterium massiliensis).